We begin with the raw amino-acid sequence, 353 residues long: UPF0283 membrane protein CKO_01392 (353 aa).

Transmembrane regions (helical) follow at residues 70–90 (MVMGGLALFGVSVVGQGVQWT), 99–119 (WVALGGCAAGALIIGAGVGSV), and 213–233 (ESTLMIAVSPLALVDMAFIAW).

It belongs to the UPF0283 family.

The protein resides in the cell inner membrane. This is UPF0283 membrane protein CKO_01392 from Citrobacter koseri (strain ATCC BAA-895 / CDC 4225-83 / SGSC4696).